A 400-amino-acid polypeptide reads, in one-letter code: Queuine tRNA-ribosyltransferase catalytic subunit 1 (400 aa).

The Proton acceptor role is filled by aspartate 103. Queuine-binding positions include 103 to 107 (DSGGF), aspartate 157, glutamine 200, and glycine 227. Residues 258–264 (GVGYAVD) form an RNA binding region. Aspartate 277 acts as the Nucleophile in catalysis. The interval 282–286 (TRTAR) is RNA binding; important for wobble base 34 recognition. Positions 315, 317, 320, and 345 each coordinate Zn(2+).

The protein belongs to the queuine tRNA-ribosyltransferase family. As to quaternary structure, heterodimer of a catalytic subunit qtrt1 and an accessory subunit qtrt2. The cofactor is Zn(2+).

Its subcellular location is the cytoplasm. It localises to the mitochondrion outer membrane. The catalysed reaction is guanosine(34) in tRNA + queuine = queuosine(34) in tRNA + guanine. In terms of biological role, catalytic subunit of the queuine tRNA-ribosyltransferase (TGT) that catalyzes the base-exchange of a guanine (G) residue with queuine (Q) at position 34 (anticodon wobble position) in tRNAs with GU(N) anticodons (tRNA-Asp, -Asn, -His and -Tyr), resulting in the hypermodified nucleoside queuosine (7-(((4,5-cis-dihydroxy-2-cyclopenten-1-yl)amino)methyl)-7-deazaguanosine). Catalysis occurs through a double-displacement mechanism. The nucleophile active site attacks the C1' of nucleotide 34 to detach the guanine base from the RNA, forming a covalent enzyme-RNA intermediate. The proton acceptor active site deprotonates the incoming queuine, allowing a nucleophilic attack on the C1' of the ribose to form the product. This is Queuine tRNA-ribosyltransferase catalytic subunit 1 from Danio rerio (Zebrafish).